A 400-amino-acid polypeptide reads, in one-letter code: Enoyl-[acyl-carrier-protein] reductase [NADH] (400 aa).

Residues 48-53 (GSSSGY), 74-75 (FE), 111-112 (DA), and 139-140 (LA) contribute to the NAD(+) site. Residue Tyr225 participates in substrate binding. Catalysis depends on Tyr235, which acts as the Proton donor. Residues Lys244 and 273–275 (VVT) contribute to the NAD(+) site.

It belongs to the TER reductase family. In terms of assembly, monomer.

It catalyses the reaction a 2,3-saturated acyl-[ACP] + NAD(+) = a (2E)-enoyl-[ACP] + NADH + H(+). Its pathway is lipid metabolism; fatty acid biosynthesis. In terms of biological role, involved in the final reduction of the elongation cycle of fatty acid synthesis (FAS II). Catalyzes the reduction of a carbon-carbon double bond in an enoyl moiety that is covalently linked to an acyl carrier protein (ACP). In Shewanella denitrificans (strain OS217 / ATCC BAA-1090 / DSM 15013), this protein is Enoyl-[acyl-carrier-protein] reductase [NADH].